The following is a 277-amino-acid chain: Putative hydro-lyase SCO1412 (277 aa).

The protein belongs to the D-glutamate cyclase family.

In Streptomyces coelicolor (strain ATCC BAA-471 / A3(2) / M145), this protein is Putative hydro-lyase SCO1412.